A 309-amino-acid polypeptide reads, in one-letter code: Acetylglutamate kinase (309 aa).

Residues 82–83 (GG), arginine 104, and asparagine 206 contribute to the substrate site.

This sequence belongs to the acetylglutamate kinase family. ArgB subfamily.

Its subcellular location is the cytoplasm. It carries out the reaction N-acetyl-L-glutamate + ATP = N-acetyl-L-glutamyl 5-phosphate + ADP. It functions in the pathway amino-acid biosynthesis; L-arginine biosynthesis; N(2)-acetyl-L-ornithine from L-glutamate: step 2/4. In terms of biological role, catalyzes the ATP-dependent phosphorylation of N-acetyl-L-glutamate. The protein is Acetylglutamate kinase of Cupriavidus pinatubonensis (strain JMP 134 / LMG 1197) (Cupriavidus necator (strain JMP 134)).